A 466-amino-acid chain; its full sequence is Uronate isomerase (466 aa).

Belongs to the metallo-dependent hydrolases superfamily. Uronate isomerase family.

It catalyses the reaction D-glucuronate = D-fructuronate. The catalysed reaction is aldehydo-D-galacturonate = keto-D-tagaturonate. It participates in carbohydrate metabolism; pentose and glucuronate interconversion. The polypeptide is Uronate isomerase (Rhizorhabdus wittichii (strain DSM 6014 / CCUG 31198 / JCM 15750 / NBRC 105917 / EY 4224 / RW1) (Sphingomonas wittichii)).